Consider the following 612-residue polypeptide: Probable methyltransferase PMT9 (612 aa).

Residues 1-14 (MKHFRTERVRATPK) are Cytoplasmic-facing. The helical; Signal-anchor for type II membrane protein transmembrane segment at 15–35 (LFTYVLVGFIALLGLTCLYYG) threads the bilayer. Residues 36–612 (SSFAPGSRKS…LWSLPAISVS (577 aa)) are Lumenal-facing. 3 N-linked (GlcNAc...) asparagine glycosylation sites follow: N107, N383, and N562.

Belongs to the methyltransferase superfamily.

The protein localises to the golgi apparatus membrane. The protein is Probable methyltransferase PMT9 of Arabidopsis thaliana (Mouse-ear cress).